The sequence spans 156 residues: Snaclec A4 (156 aa).

Positions 1–23 (MGRSISVSFGLLVVFLSLSGTGA) are cleaved as a signal peptide. Cys-27 and Cys-38 form a disulfide bridge. The region spanning 34–155 (HEGHCYKVFN…CGQPYRFTCE (122 aa)) is the C-type lectin domain. The N-linked (GlcNAc...) asparagine glycan is linked to Asn-45. 2 disulfide bridges follow: Cys-55–Cys-154 and Cys-129–Cys-146.

This sequence belongs to the snaclec family. In terms of assembly, heterodimer; disulfide-linked. As to expression, expressed by the venom gland.

The protein resides in the secreted. Functionally, interferes with one step of hemostasis (modulation of platelet aggregation, or coagulation cascade, for example). This Macrovipera lebetinus (Levantine viper) protein is Snaclec A4.